The chain runs to 387 residues: Yellow-related salivary protein ASP2 (387 aa).

A signal peptide spans 1–18 (MKIFLCLIVVVSLQGVLA).

Belongs to the major royal jelly protein family. As to expression, female salivary gland (at protein level).

Its subcellular location is the secreted. Probably modulates blood feeding of sand flies on vertebrate species by binding and sequestering different mediators involved in the host response. Binds biogenic amines. Binds octopamine with high affinity. Binds serotonin and dopamine with medium affinity. Poorly binds histamine. Does not bind noradrenaline and adrenaline. The chain is Yellow-related salivary protein ASP2 from Phlebotomus orientalis (Phlebotomine sand fly).